Consider the following 530-residue polypeptide: Na(+)/H(+) antiporter NhaB (530 aa).

A run of 10 helical transmembrane segments spans residues 13-33, 67-87, 90-110, 138-158, 205-225, 245-265, 302-333, 350-370, 449-469, and 477-497; these read FLGQ…LINP, PGGL…ETVL, VVGN…IYFL, AAAL…VIAV, LLMH…VGEP, MAPI…FLEF, LVIQ…VIIL, FEEA…VAVI, VATP…LAPL, and MVIM…VMTA.

This sequence belongs to the NhaB Na(+)/H(+) (TC 2.A.34) antiporter family.

The protein resides in the cell inner membrane. The catalysed reaction is 2 Na(+)(in) + 3 H(+)(out) = 2 Na(+)(out) + 3 H(+)(in). In terms of biological role, na(+)/H(+) antiporter that extrudes sodium in exchange for external protons. In Alcanivorax borkumensis (strain ATCC 700651 / DSM 11573 / NCIMB 13689 / SK2), this protein is Na(+)/H(+) antiporter NhaB.